We begin with the raw amino-acid sequence, 654 residues long: Pyoverdine export ATP-binding/permease protein PvdT (654 aa).

The ABC transporter domain occupies 6 to 245 (IELCDIRKAY…AHKGIQAEEL (240 aa)). 43 to 50 (GASGSGKS) lines the ATP pocket. The next 4 membrane-spanning stretches (helical) occupy residues 282-302 (ALTLLGIIIGVASVVVMLAVG), 529-549 (LSLMLGAIAAISLLVGGIGVM), 584-604 (AIMLSMVGGLTGIALALVVGA), and 614-634 (AFALPAIVGAFACAVITGVVF).

It belongs to the ABC transporter superfamily. Macrolide exporter (TC 3.A.1.122) family. As to quaternary structure, part of the tripartite efflux system PvdRT-OpmQ, which is composed of an inner membrane component with both ATPase and permease domains, PvdT, a periplasmic membrane fusion protein, PvdR, and an outer membrane component, OpmQ.

Its subcellular location is the cell inner membrane. Its activity is regulated as follows. Has a basal ATPase activity that is stimulated by PvdR. In vitro, interaction with PVD influences the affinity of PvdT to PvdR. In terms of biological role, part of the tripartite efflux system PvdRT-OpmQ required for the secretion into the extracellular milieu of the siderophore pyoverdine (PVD), which is involved in iron acquisition. This subunit binds PVD and drives its secretion by hydrolyzing ATP. The system is responsible for export of newly synthesized PVD after the final steps of biosynthesis have taken place in the periplasm. It is also responsible for recycling of PVD after internalization of ferri-PVD into the periplasm by the outer-membrane receptor FpvA and release of iron from PVD, thus making PVD available for new cycles of iron uptake. Contributes to resistance against ampicillin. This Pseudomonas putida (strain ATCC 47054 / DSM 6125 / CFBP 8728 / NCIMB 11950 / KT2440) protein is Pyoverdine export ATP-binding/permease protein PvdT.